Here is a 287-residue protein sequence, read N- to C-terminus: Glycine--tRNA ligase alpha subunit (287 aa).

Belongs to the class-II aminoacyl-tRNA synthetase family. Tetramer of two alpha and two beta subunits.

It is found in the cytoplasm. It carries out the reaction tRNA(Gly) + glycine + ATP = glycyl-tRNA(Gly) + AMP + diphosphate. The protein is Glycine--tRNA ligase alpha subunit of Campylobacter jejuni (strain RM1221).